We begin with the raw amino-acid sequence, 309 residues long: Taste receptor type 2 member 8 (309 aa).

The Extracellular portion of the chain corresponds to M1 to N7. Residues I8–A28 traverse the membrane as a helical segment. Residues L29–N50 lie on the Cytoplasmic side of the membrane. The chain crosses the membrane as a helical span at residues L51–L71. Residues N72–Q82 are Extracellular-facing. The helical transmembrane segment at I83–L103 threads the bilayer. The Cytoplasmic portion of the chain corresponds to N104 to H131. A helical membrane pass occupies residues W132–L152. The Extracellular segment spans residues S153–T184. N167 carries N-linked (GlcNAc...) asparagine glycosylation. The chain crosses the membrane as a helical span at residues L185–V205. The Cytoplasmic segment spans residues R206 to S239. Residues F240 to M260 traverse the membrane as a helical segment. Residues T261–A266 are Extracellular-facing. A helical transmembrane segment spans residues V267–V287. Residues L288–I309 lie on the Cytoplasmic side of the membrane.

This sequence belongs to the G-protein coupled receptor T2R family. As to expression, expressed in subsets of taste receptor cells of the tongue and palate epithelium and exclusively in gustducin-positive cells.

The protein localises to the membrane. In terms of biological role, receptor that may play a role in the perception of bitterness and is gustducin-linked. May play a role in sensing the chemical composition of the gastrointestinal content. The activity of this receptor may stimulate alpha gustducin, mediate PLC-beta-2 activation and lead to the gating of TRPM5. The sequence is that of Taste receptor type 2 member 8 (TAS2R8) from Homo sapiens (Human).